Consider the following 173-residue polypeptide: Co-chaperone protein HscB homolog (173 aa).

The 73-residue stretch at 5–77 folds into the J domain; sequence SHFALFDLEP…SQRARYLLSL (73 aa).

It belongs to the HscB family. In terms of assembly, interacts with HscA and stimulates its ATPase activity.

Co-chaperone involved in the maturation of iron-sulfur cluster-containing proteins. Seems to help targeting proteins to be folded toward HscA. The sequence is that of Co-chaperone protein HscB homolog from Azotobacter vinelandii (strain DJ / ATCC BAA-1303).